The primary structure comprises 169 residues: MASQSSKPQSIYDFTVKDAKGNDVDLSIYKGKVLIIVNVASQCGLTNSNYTDMTEIYKKYKDQGLEILAFPCNQFGGQEPGSIEEIQNMVCTRFKAEYPIFDKVDVNGDNAAPLYKFLKSSKGGFFGDSIKWNFSKFLVDKEGNVVDRYSPTTTPASMEKDIKKLLGVA.

Cys-43 is a catalytic residue.

This sequence belongs to the glutathione peroxidase family.

It is found in the cytoplasm. It carries out the reaction a hydroperoxy polyunsaturated fatty acid + 2 glutathione = a hydroxy polyunsaturated fatty acid + glutathione disulfide + H2O. Protects cells and enzymes from oxidative damage, by catalyzing the reduction of hydrogen peroxide, lipid peroxides and organic hydroperoxide, by glutathione. This is Probable phospholipid hydroperoxide glutathione peroxidase from Nicotiana tabacum (Common tobacco).